Consider the following 474-residue polypeptide: ABHD16B (474 aa).

The region spanning Val-175–Thr-295 is the AB hydrolase-1 domain. Catalysis depends on charge relay system residues Ser-248, Asp-323, and His-423.

Belongs to the AB hydrolase superfamily. ABHD16 family. As to expression, expressed in most tissues, with highest expression found in the testes, skeletal muscle, and brown adipose tissue.

The enzyme catalyses a 1,2-diacyl-sn-glycero-3-phospho-L-serine + H2O = a 2-acyl-sn-glycero-3-phospho-L-serine + a fatty acid + H(+). It catalyses the reaction a 1-acylglycerol + H2O = glycerol + a fatty acid + H(+). The catalysed reaction is 1-(9Z-octadecenoyl)-glycerol + H2O = glycerol + (9Z)-octadecenoate + H(+). Its function is as follows. Hydrolyzes the sn-1 position of glycerophospholipids with high specificity towards phosphatidylserine (PS), PS-PLA1 enzyme. Also hydrolyzes the acyl chain of glycerolipids with a preference for the monoacylglycerol (MAG) 1-acylglycerol, MAG lipase. Plays a regulatory role in cellular lipid homeostasis by modulating genes involved in neutral lipid degradation and in phospholipid synthesis and composition. The protein is ABHD16B of Mus musculus (Mouse).